A 443-amino-acid polypeptide reads, in one-letter code: Glutamate--tRNA ligase 1 (443 aa).

Residues 9 to 19 (PSPTGYLHVGN) carry the 'HIGH' region motif. Residues 238-242 (KISKR) carry the 'KMSKS' region motif. Lys241 contacts ATP.

Belongs to the class-I aminoacyl-tRNA synthetase family. Glutamate--tRNA ligase type 1 subfamily. As to quaternary structure, monomer.

The protein localises to the cytoplasm. It catalyses the reaction tRNA(Glu) + L-glutamate + ATP = L-glutamyl-tRNA(Glu) + AMP + diphosphate. Catalyzes the attachment of glutamate to tRNA(Glu) in a two-step reaction: glutamate is first activated by ATP to form Glu-AMP and then transferred to the acceptor end of tRNA(Glu). The protein is Glutamate--tRNA ligase 1 of Ehrlichia ruminantium (strain Welgevonden).